The sequence spans 213 residues: Ribosomal RNA small subunit methyltransferase G (213 aa).

Residues Gly-75, Phe-80, 128-129, and Arg-144 contribute to the S-adenosyl-L-methionine site; that span reads IE.

Belongs to the methyltransferase superfamily. RNA methyltransferase RsmG family.

It is found in the cytoplasm. It carries out the reaction guanosine(527) in 16S rRNA + S-adenosyl-L-methionine = N(7)-methylguanosine(527) in 16S rRNA + S-adenosyl-L-homocysteine. Specifically methylates the N7 position of guanine in position 527 of 16S rRNA. This is Ribosomal RNA small subunit methyltransferase G from Brucella ovis (strain ATCC 25840 / 63/290 / NCTC 10512).